A 242-amino-acid polypeptide reads, in one-letter code: Ribonuclease PH (242 aa).

Residues Arg-87 and 125 to 127 (STR) each bind phosphate.

Belongs to the RNase PH family. In terms of assembly, homohexameric ring arranged as a trimer of dimers.

It carries out the reaction tRNA(n+1) + phosphate = tRNA(n) + a ribonucleoside 5'-diphosphate. Functionally, phosphorolytic 3'-5' exoribonuclease that plays an important role in tRNA 3'-end maturation. Removes nucleotide residues following the 3'-CCA terminus of tRNAs; can also add nucleotides to the ends of RNA molecules by using nucleoside diphosphates as substrates, but this may not be physiologically important. Probably plays a role in initiation of 16S rRNA degradation (leading to ribosome degradation) during starvation. The protein is Ribonuclease PH of Synechococcus sp. (strain JA-3-3Ab) (Cyanobacteria bacterium Yellowstone A-Prime).